The primary structure comprises 294 residues: C-type lectin domain family 4 member G (294 aa).

Topologically, residues 1-30 (MNTGEYNKLGSAIEEVSRGQLGRWECYKQR) are cytoplasmic. The chain crosses the membrane as a helical; Signal-anchor for type II membrane protein span at residues 31–51 (LFFLVLALLVATVLWALILST). At 52–294 (LLSSASSKLR…WICEKRSSCY (243 aa)) the chain is on the extracellular side. The N-linked (GlcNAc...) asparagine glycan is linked to Asn73. Residues 100–151 (AQLQTTLAEFKDIQAKLMEQESILKELQERVTQDLAKASRDRENIRSELFQA) adopt a coiled-coil conformation. N-linked (GlcNAc...) asparagine glycosylation is found at Asn159, Asn246, and Asn256. The C-type lectin domain occupies 172 to 287 (FQGSCYYFSE…CTNERDGWIC (116 aa)). Cys264 and Cys278 are joined by a disulfide.

The protein localises to the cell membrane. In terms of biological role, binds mannose, N-acetylglucosamine (GlcNAc) and fucose, but not galactose, in a Ca(2+)-dependent manner. The sequence is that of C-type lectin domain family 4 member G (Clec4g) from Mus musculus (Mouse).